A 3313-amino-acid chain; its full sequence is Cadherin EGF LAG seven-pass G-type receptor 3 (3313 aa).

A signal peptide spans 1 to 31 (MARRPLWWGLPGPSTPLLLLLLFSLFPSSRE). Residues 32–2538 (EMGGGGDQGW…RLEGDLELLA (2507 aa)) lie on the Extracellular side of the membrane. Disordered regions lie at residues 148-187 (LPLD…RNGR) and 205-269 (EPGH…RMRS). Residues 258–268 (HESRTAPERMR) show a composition bias toward basic and acidic residues. 9 consecutive Cadherin domains span residues 317-424 (PQYN…APVF), 425-536 (EQAQ…APQF), 537-642 (SEKR…SPIF), 643-747 (VSTP…RPEF), 748-849 (TMKE…RPVF), 850-952 (QSAH…APQF), 953-1058 (VASH…APVF), 1059-1160 (PAEE…SPVL), and 1161-1257 (NNFQ…VVII). Asn623 carries N-linked (GlcNAc...) asparagine glycosylation. The N-linked (GlcNAc...) asparagine glycan is linked to Asn838. Residues Asn1173, Asn1213, Asn1308, and Asn1318 are each glycosylated (N-linked (GlcNAc...) asparagine). The region spanning 1366–1424 (DDNVCLREPCENYMKCVSVLRFDSSAPFLASASTLFRPIQPIAGLRCRCPPGFTGDFCE) is the EGF-like 1; calcium-binding domain. Disulfide bonds link Cys1370–Cys1381, Cys1375–Cys1412, Cys1414–Cys1423, Cys1430–Cys1441, Cys1435–Cys1450, Cys1452–Cys1461, Cys1470–Cys1481, Cys1475–Cys1491, and Cys1493–Cys1504. The EGF-like 2; calcium-binding domain occupies 1426–1462 (ELDLCYSNPCRNGGACARREGGYTCVCRPRFTGEDCE). Residues 1466–1505 (EAGRCVPGVCRNGGTCTNAPNGGFRCQCPAGGAFEGPRCE) form the EGF-like 3; calcium-binding domain. Residues 1506-1710 (VAARSFPPSS…VANNGTTAGC (205 aa)) form the Laminin G-like 1 domain. 2 N-linked (GlcNAc...) asparagine glycosylation sites follow: Asn1640 and Asn1704. Intrachain disulfides connect Cys1684/Cys1710, Cys1717/Cys1728, Cys1722/Cys1737, and Cys1739/Cys1748. One can recognise an EGF-like 4; calcium-binding domain in the interval 1713 to 1749 (KSHFCASGPCKNGGLCSERWGGFSCDCPVGFGGKDCR). Residues 1753-1935 (AHPYHFQGNG…SHRINVEPGC (183 aa)) form the Laminin G-like 2 domain. Asn1761 carries N-linked (GlcNAc...) asparagine glycosylation. Disulfide bonds link Cys1906–Cys1935, Cys1941–Cys1952, Cys1946–Cys1961, Cys1963–Cys1972, Cys1976–Cys1987, Cys1981–Cys1999, Cys2001–Cys2010, Cys2018–Cys2031, and Cys2033–Cys2043. The EGF-like 5; calcium-binding domain maps to 1937–1972 (VTNPCASGPCPPHANCKDLWQTFSCTCWPGYYGPGC). Asp1954 is modified ((3R)-3-hydroxyaspartate). The EGF-like 6; calcium-binding domain occupies 1973 to 2011 (VDACLLNPCQNQGSCRHLQGGPHGYTCDCASGYFGQHCE). Residues 2012 to 2044 (HRMDQQCPRGWWGSPTCGPCNCDVHKGFDPNCN) form the EGF-like 7; calcium-binding domain. Asn2044 carries an N-linked (GlcNAc...) asparagine glycan. One can recognise an EGF-like 8; calcium-binding domain in the interval 2046 to 2081 (TSGQCHCKEFHYRPRGSDSCLPCDCYPVGSTSRSCA). Cystine bridges form between Cys2050–Cys2065, Cys2052–Cys2068, Cys2070–Cys2080, Cys2089–Cys2098, and Cys2101–Cys2113. The Laminin EGF-like domain occupies 2068–2115 (CDCYPVGSTSRSCAPHSGQCPCRPGALGRQCNSCDSPFAEVTASGCRV). Position 2117 is a phosphotyrosine (Tyr2117). 5 N-linked (GlcNAc...) asparagine glycosylation sites follow: Asn2173, Asn2192, Asn2382, Asn2472, and Asn2504. The segment at 2356–2395 (HTHVLLPSQSPQPSPSEVLPTSSNAENATASGVVSPPAPL) is disordered. The GAIN-B domain maps to 2364 to 2528 (QSPQPSPSEV…GVLMDASPRE (165 aa)). Polar residues predominate over residues 2374–2387 (LPTSSNAENATASG). Cystine bridges form between Cys2478–Cys2510 and Cys2498–Cys2512. The interval 2478–2528 (CVQWDPPGPADQHGMWTARDCELVHRNGSHARCRCSRTGTFGVLMDASPRE) is GPS. Residues 2539 to 2559 (VFTHVVVAASVTALVLTAAVL) form a helical membrane-spanning segment. Topologically, residues 2560-2570 (LSLRSLKSNVR) are cytoplasmic. A helical membrane pass occupies residues 2571–2591 (GIHANVAAALGVAELLFLLGI). Residues 2592–2599 (HRTHNQLL) are Extracellular-facing. Residues 2600-2620 (CTVVAILLHYFFLSTFAWLLV) traverse the membrane as a helical segment. At 2621-2641 (QGLHLYRMQVEPRNVDRGAMR) the chain is on the cytoplasmic side. A helical transmembrane segment spans residues 2642 to 2662 (FYHALGWGVPAVLLGLAVGLD). The Extracellular segment spans residues 2663 to 2679 (PEGYGNPDFCWISIHEP). Residues 2680 to 2700 (LIWSFAGPIVLVIVMNGIMFL) form a helical membrane-spanning segment. The Cytoplasmic segment spans residues 2701 to 2724 (LAARTSCSTGQREAKKTSVLRTLR). A helical membrane pass occupies residues 2725–2745 (SSFLLLLLVSASWLFGLLAVN). Topologically, residues 2746–2752 (HSVLAFH) are extracellular. The chain crosses the membrane as a helical span at residues 2753 to 2773 (YLHAGLCGLQGLAVLLLFCVL). Residues 2774–3313 (NADARAAWTP…SEVPRSEGHS (540 aa)) lie on the Cytoplasmic side of the membrane. Disordered stretches follow at residues 2887 to 2927 (AGAD…RPLR) and 2977 to 3004 (SNKD…RAQR). The segment covering 2889–2899 (ADSDSDSDLSL) has biased composition (acidic residues). A compositionally biased stretch (basic residues) spans 2918–2927 (TRGRFQRPLR). Position 3050 is a phosphotyrosine (Tyr3050). Disordered stretches follow at residues 3091–3242 (APVL…PSTE) and 3255–3313 (NSSA…EGHS). Ser3098 carries the post-translational modification Phosphoserine. The segment covering 3102-3119 (SQERLDTAPARLEPRDRG) has biased composition (basic and acidic residues). 2 stretches are compositionally biased toward low complexity: residues 3178-3197 (QRPL…SLSR) and 3255-3289 (NSSA…PSTP). Over residues 3290 to 3301 (RSATSHSISELS) the composition is skewed to polar residues.

This sequence belongs to the G-protein coupled receptor 2 family. LN-TM7 subfamily. In terms of processing, the iron and 2-oxoglutarate dependent 3-hydroxylation of aspartate and asparagine is (R) stereospecific within EGF domains. Expressed in the brain. Expressed in cerebellum, olfactory bulb, cerebral cortex, hippocampus and brain stem.

Its subcellular location is the cell membrane. Its function is as follows. Receptor that may have an important role in cell/cell signaling during nervous system formation. The protein is Cadherin EGF LAG seven-pass G-type receptor 3 (Celsr3) of Rattus norvegicus (Rat).